We begin with the raw amino-acid sequence, 451 residues long: Methylenetetrahydrofolate--tRNA-(uracil-5-)-methyltransferase TrmFO (451 aa).

10 to 15 (GGGLAG) provides a ligand contact to FAD.

This sequence belongs to the MnmG family. TrmFO subfamily. FAD is required as a cofactor.

Its subcellular location is the cytoplasm. It catalyses the reaction uridine(54) in tRNA + (6R)-5,10-methylene-5,6,7,8-tetrahydrofolate + NADH + H(+) = 5-methyluridine(54) in tRNA + (6S)-5,6,7,8-tetrahydrofolate + NAD(+). The enzyme catalyses uridine(54) in tRNA + (6R)-5,10-methylene-5,6,7,8-tetrahydrofolate + NADPH + H(+) = 5-methyluridine(54) in tRNA + (6S)-5,6,7,8-tetrahydrofolate + NADP(+). Its function is as follows. Catalyzes the folate-dependent formation of 5-methyl-uridine at position 54 (M-5-U54) in all tRNAs. In Anaeromyxobacter sp. (strain Fw109-5), this protein is Methylenetetrahydrofolate--tRNA-(uracil-5-)-methyltransferase TrmFO.